The sequence spans 80 residues: MGFTKIVVTFFLVVMLAVSSSSQNAMASEIKAKINGLECFNTCTPYYDDYKCNVDCLSSGYPAGDCHIVSPSQPKKCCCY.

The signal sequence occupies residues 1–27; the sequence is MGFTKIVVTFFLVVMLAVSSSSQNAMA. 4 cysteine pairs are disulfide-bonded: C39–C79, C43–C66, C52–C77, and C56–C78.

The protein belongs to the DEFL family.

Its subcellular location is the secreted. The chain is Defensin-like protein 50 (LCR49) from Arabidopsis thaliana (Mouse-ear cress).